The primary structure comprises 539 residues: Prolyl 4-hydroxylase subunit alpha-2 (539 aa).

The N-terminal stretch at 1–16 (MRAVLLVCLLAGLAHA) is a signal peptide. Asparagine 110 carries N-linked (GlcNAc...) asparagine glycosylation. The Fe2OG dioxygenase domain occupies 401–509 (TSEELQVANY…KWVSNKWIHE (109 aa)). Positions 419, 421, and 490 each coordinate Fe cation. Lysine 500 provides a ligand contact to 2-oxoglutarate.

This sequence belongs to the P4HA family. Heterotetramer of two alpha chains and two beta chains. Exist either as a phy-2(2)/pdi-2(2) tetramer or as a phy-1/phy-2/pdi-2(2) tetramer. The cofactor is Fe(2+). L-ascorbate serves as cofactor.

The protein localises to the endoplasmic reticulum lumen. It catalyses the reaction L-prolyl-[collagen] + 2-oxoglutarate + O2 = trans-4-hydroxy-L-prolyl-[collagen] + succinate + CO2. Catalyzes the post-translational formation of 4-hydroxyproline in -Xaa-Pro-Gly- sequences in collagens and other proteins. The sequence is that of Prolyl 4-hydroxylase subunit alpha-2 (phy-2) from Caenorhabditis elegans.